The sequence spans 277 residues: MEWWTAFQAFILGVVEGLTEFLPISSTGHQIIVADLIGFGGERAKAFNIIIQLAAILAVVWEFRGKIFQVVRDLPSQRQAQRFTANLLIAFFPAVVLGVLFADLIHEWLFNPITVALALVVGGVVMLWAERRKHVIRAEHVDDMTWKDALKIGCAQCLAMIPGTSRSGATIIGGLLFGLSRKAATEFSFFLAMPTMVGAAVYSGYVYRDLFRPEDLPVFAVGFVTSFVFAMLAVRALLKFIGNHSYAAFAWYRIAFGLLILATWQFHLIDWSTAGEV.

6 helical membrane passes run 47–67, 85–105, 108–128, 187–207, 218–238, and 249–269; these read FNII…RGKI, ANLL…ADLI, WLFN…VMLW, FSFF…GYVY, VFAV…RALL, and FAWY…FHLI.

This sequence belongs to the UppP family.

The protein resides in the cell inner membrane. It carries out the reaction di-trans,octa-cis-undecaprenyl diphosphate + H2O = di-trans,octa-cis-undecaprenyl phosphate + phosphate + H(+). Catalyzes the dephosphorylation of undecaprenyl diphosphate (UPP). Confers resistance to bacitracin. The sequence is that of Undecaprenyl-diphosphatase from Pseudomonas aeruginosa (strain ATCC 15692 / DSM 22644 / CIP 104116 / JCM 14847 / LMG 12228 / 1C / PRS 101 / PAO1).